The chain runs to 353 residues: Photosystem II protein D1 (353 aa).

An N-acetylthreonine modification is found at Thr-2. The residue at position 2 (Thr-2) is a Phosphothreonine. 3 helical membrane passes run 29–46 (YIGWFGVLMIPTLLTATS), 118–133 (HFLLGVACYMGREWEL), and 142–156 (WIAVAYSAPVAAATA). His-118 contributes to the chlorophyll a binding site. Pheophytin a is bound at residue Tyr-126. Residues Asp-170 and Glu-189 each contribute to the [CaMn4O5] cluster site. Residues 197-218 (FHMLGVAGVFGGSLFSAMHGSL) traverse the membrane as a helical segment. His-198 is a chlorophyll a binding site. A quinone-binding positions include His-215 and 264–265 (SF). His-215 contacts Fe cation. His-272 provides a ligand contact to Fe cation. The chain crosses the membrane as a helical span at residues 274 to 288 (FLAAWPVVGIWFTAL). The [CaMn4O5] cluster site is built by His-332, Glu-333, Asp-342, and Ala-344. Positions 345-353 (AMEAPSVNG) are excised as a propeptide.

Belongs to the reaction center PufL/M/PsbA/D family. PSII is composed of 1 copy each of membrane proteins PsbA, PsbB, PsbC, PsbD, PsbE, PsbF, PsbH, PsbI, PsbJ, PsbK, PsbL, PsbM, PsbT, PsbX, PsbY, PsbZ, Psb30/Ycf12, at least 3 peripheral proteins of the oxygen-evolving complex and a large number of cofactors. It forms dimeric complexes. Requires The D1/D2 heterodimer binds P680, chlorophylls that are the primary electron donor of PSII, and subsequent electron acceptors. It shares a non-heme iron and each subunit binds pheophytin, quinone, additional chlorophylls, carotenoids and lipids. D1 provides most of the ligands for the Mn4-Ca-O5 cluster of the oxygen-evolving complex (OEC). There is also a Cl(-1) ion associated with D1 and D2, which is required for oxygen evolution. The PSII complex binds additional chlorophylls, carotenoids and specific lipids. as cofactor. Post-translationally, tyr-161 forms a radical intermediate that is referred to as redox-active TyrZ, YZ or Y-Z. C-terminally processed by CTPA; processing is essential to allow assembly of the oxygen-evolving complex and thus photosynthetic growth.

The protein resides in the plastid. It localises to the chloroplast thylakoid membrane. It carries out the reaction 2 a plastoquinone + 4 hnu + 2 H2O = 2 a plastoquinol + O2. Its function is as follows. Photosystem II (PSII) is a light-driven water:plastoquinone oxidoreductase that uses light energy to abstract electrons from H(2)O, generating O(2) and a proton gradient subsequently used for ATP formation. It consists of a core antenna complex that captures photons, and an electron transfer chain that converts photonic excitation into a charge separation. The D1/D2 (PsbA/PsbD) reaction center heterodimer binds P680, the primary electron donor of PSII as well as several subsequent electron acceptors. In Phaseolus vulgaris (Kidney bean), this protein is Photosystem II protein D1.